Reading from the N-terminus, the 39-residue chain is Photosystem II reaction center protein I (39 aa).

A helical membrane pass occupies residues 6–26 (ISVYSVVFFFIGIFMFGFLAS).

Belongs to the PsbI family. As to quaternary structure, PSII is composed of 1 copy each of membrane proteins PsbA, PsbB, PsbC, PsbD, PsbE, PsbF, PsbH, PsbI, PsbJ, PsbK, PsbL, PsbM, PsbT, PsbX, PsbY, PsbZ, Psb30/Ycf12, peripheral proteins PsbO, CyanoQ (PsbQ), PsbU, PsbV and a large number of cofactors. It forms dimeric complexes.

It localises to the cellular thylakoid membrane. Its function is as follows. One of the components of the core complex of photosystem II (PSII), required for its stability and/or assembly. PSII is a light-driven water:plastoquinone oxidoreductase that uses light energy to abstract electrons from H(2)O, generating O(2) and a proton gradient subsequently used for ATP formation. It consists of a core antenna complex that captures photons, and an electron transfer chain that converts photonic excitation into a charge separation. This Synechococcus sp. (strain RCC307) protein is Photosystem II reaction center protein I.